The sequence spans 483 residues: UDP-N-acetylmuramoyl-L-alanyl-D-glutamate--2,6-diaminopimelate ligase (483 aa).

Residue S29 coordinates UDP-N-acetyl-alpha-D-muramoyl-L-alanyl-D-glutamate. 107-113 contributes to the ATP binding site; that stretch reads GTSGKTS. Residues 149–150, S176, Q182, and R184 each bind UDP-N-acetyl-alpha-D-muramoyl-L-alanyl-D-glutamate; that span reads TT. K216 bears the N6-carboxylysine mark. Residues R380, 404–407, G452, and E456 each bind meso-2,6-diaminopimelate; that span reads DNPR. The short motif at 404–407 is the Meso-diaminopimelate recognition motif element; it reads DNPR.

The protein belongs to the MurCDEF family. MurE subfamily. The cofactor is Mg(2+). In terms of processing, carboxylation is probably crucial for Mg(2+) binding and, consequently, for the gamma-phosphate positioning of ATP.

Its subcellular location is the cytoplasm. It carries out the reaction UDP-N-acetyl-alpha-D-muramoyl-L-alanyl-D-glutamate + meso-2,6-diaminopimelate + ATP = UDP-N-acetyl-alpha-D-muramoyl-L-alanyl-gamma-D-glutamyl-meso-2,6-diaminopimelate + ADP + phosphate + H(+). Its pathway is cell wall biogenesis; peptidoglycan biosynthesis. Functionally, catalyzes the addition of meso-diaminopimelic acid to the nucleotide precursor UDP-N-acetylmuramoyl-L-alanyl-D-glutamate (UMAG) in the biosynthesis of bacterial cell-wall peptidoglycan. This Chelativorans sp. (strain BNC1) protein is UDP-N-acetylmuramoyl-L-alanyl-D-glutamate--2,6-diaminopimelate ligase.